A 248-amino-acid polypeptide reads, in one-letter code: Ubiquinone/menaquinone biosynthesis C-methyltransferase UbiE (248 aa).

2 residues coordinate S-adenosyl-L-methionine: Ser-68 and Asp-92.

Belongs to the class I-like SAM-binding methyltransferase superfamily. MenG/UbiE family.

It catalyses the reaction a 2-demethylmenaquinol + S-adenosyl-L-methionine = a menaquinol + S-adenosyl-L-homocysteine + H(+). The enzyme catalyses a 2-methoxy-6-(all-trans-polyprenyl)benzene-1,4-diol + S-adenosyl-L-methionine = a 5-methoxy-2-methyl-3-(all-trans-polyprenyl)benzene-1,4-diol + S-adenosyl-L-homocysteine + H(+). It functions in the pathway quinol/quinone metabolism; menaquinone biosynthesis; menaquinol from 1,4-dihydroxy-2-naphthoate: step 2/2. The protein operates within cofactor biosynthesis; ubiquinone biosynthesis. Functionally, methyltransferase required for the conversion of demethylmenaquinol (DMKH2) to menaquinol (MKH2) and the conversion of 2-polyprenyl-6-methoxy-1,4-benzoquinol (DDMQH2) to 2-polyprenyl-3-methyl-6-methoxy-1,4-benzoquinol (DMQH2). The chain is Ubiquinone/menaquinone biosynthesis C-methyltransferase UbiE from Rickettsia bellii (strain RML369-C).